The following is a 182-amino-acid chain: Phospholipase A2 inhibitor gamma subunit A (182 aa).

8 disulfides stabilise this stretch: Cys3–Cys27, Cys6–Cys13, Cys20–Cys48, Cys54–Cys75, Cys76–Cys81, Cys99–Cys124, Cys117–Cys146, and Cys150–Cys172. Asn157 carries an N-linked (GlcNAc...) asparagine glycan.

The protein belongs to the CNF-like-inhibitor family. Heterotrimer of 2 subunits A and 1 subunit B. In terms of processing, N-glycosylation is not important for activity, since deglycosylation does not change its PLA2 inhibitory activity. As to expression, expressed by the liver.

It is found in the secreted. In terms of biological role, strongly inhibits its own venom PLA2 and all other PLA2s tested including Elapid, Crotalid and Viperid venom PLA2s, as well as honeybee PLA2s. This chain is Phospholipase A2 inhibitor gamma subunit A, found in Laticauda semifasciata (Black-banded sea krait).